Consider the following 480-residue polypeptide: Protein DETOXIFICATION 15 (480 aa).

The next 12 membrane-spanning stretches (helical) occupy residues 36–56 (GPLI…VMFV), 69–89 (IATS…ASAM), 118–138 (LLSV…VFFG), 143–163 (IAHL…AYGL), 180–200 (VVIC…VLVL), 208–228 (GAAV…SCYV), 255–275 (LVIP…ELLV), 294–314 (VWMI…NELG), 326–346 (RVVL…LILI), 360–380 (VVSH…LDSF), 396–416 (IGAF…GLLL), and 428–448 (WLGI…ITFF).

Belongs to the multi antimicrobial extrusion (MATE) (TC 2.A.66.1) family.

The protein resides in the membrane. This chain is Protein DETOXIFICATION 15, found in Arabidopsis thaliana (Mouse-ear cress).